Here is a 324-residue protein sequence, read N- to C-terminus: tRNA pseudouridine synthase B (324 aa).

The active-site Nucleophile is the Asp-49. Positions 87–107 are disordered; sequence RSTDDLEGQPTKTSDKRPSRE.

The protein belongs to the pseudouridine synthase TruB family. Type 1 subfamily.

The catalysed reaction is uridine(55) in tRNA = pseudouridine(55) in tRNA. Its function is as follows. Responsible for synthesis of pseudouridine from uracil-55 in the psi GC loop of transfer RNAs. The protein is tRNA pseudouridine synthase B of Brucella abortus (strain 2308).